Consider the following 320-residue polypeptide: Ferrochelatase (320 aa).

Residues histidine 194 and glutamate 275 each contribute to the Fe cation site.

The protein belongs to the ferrochelatase family.

It localises to the cytoplasm. It catalyses the reaction heme b + 2 H(+) = protoporphyrin IX + Fe(2+). The protein operates within porphyrin-containing compound metabolism; protoheme biosynthesis; protoheme from protoporphyrin-IX: step 1/1. Its function is as follows. Catalyzes the ferrous insertion into protoporphyrin IX. The polypeptide is Ferrochelatase (Yersinia pestis bv. Antiqua (strain Antiqua)).